A 506-amino-acid polypeptide reads, in one-letter code: Maturase K (506 aa).

The protein belongs to the intron maturase 2 family. MatK subfamily.

It localises to the plastid. The protein localises to the chloroplast. In terms of biological role, usually encoded in the trnK tRNA gene intron. Probably assists in splicing its own and other chloroplast group II introns. The protein is Maturase K of Trifolium incarnatum (Crimson clover).